The primary structure comprises 628 residues: Phosphomethylpyrimidine synthase (628 aa).

Residues 1 to 14 (MTISDIGSQATTHT) show a composition bias toward polar residues. Residues 1 to 37 (MTISDIGSQATTHTPVKASKADALKTPAHRSETDARF) are disordered. The segment covering 19-37 (SKADALKTPAHRSETDARF) has biased composition (basic and acidic residues). Substrate-binding positions include Asn-260, Met-289, Tyr-318, His-354, 374–376 (SRG), 415–418 (DGLR), and Glu-454. His-458 is a Zn(2+) binding site. Position 481 (Tyr-481) interacts with substrate. Residue His-522 coordinates Zn(2+). Positions 602, 605, and 610 each coordinate [4Fe-4S] cluster.

It belongs to the ThiC family. Homodimer. [4Fe-4S] cluster is required as a cofactor.

The enzyme catalyses 5-amino-1-(5-phospho-beta-D-ribosyl)imidazole + S-adenosyl-L-methionine = 4-amino-2-methyl-5-(phosphooxymethyl)pyrimidine + CO + 5'-deoxyadenosine + formate + L-methionine + 3 H(+). It participates in cofactor biosynthesis; thiamine diphosphate biosynthesis. Catalyzes the synthesis of the hydroxymethylpyrimidine phosphate (HMP-P) moiety of thiamine from aminoimidazole ribotide (AIR) in a radical S-adenosyl-L-methionine (SAM)-dependent reaction. This is Phosphomethylpyrimidine synthase from Psychrobacter cryohalolentis (strain ATCC BAA-1226 / DSM 17306 / VKM B-2378 / K5).